A 67-amino-acid polypeptide reads, in one-letter code: Bowman-Birk type proteinase inhibitor A6 (67 aa).

Cystine bridges form between cysteine 9–cysteine 66, cysteine 10–cysteine 29, cysteine 13–cysteine 62, cysteine 16–cysteine 27, cysteine 36–cysteine 43, and cysteine 40–cysteine 54.

It belongs to the Bowman-Birk serine protease inhibitor family. As to expression, expressed in bulb (at protein level).

Serine protease inhibitor. Strongly inhibits trypsin (Ki = 4 nM) and elastase (Ki = 4.8 nM). Also inhibits chymotrypsin with a Ki of 22 nM. Does not inhibit bacterial subtilisin. The polypeptide is Bowman-Birk type proteinase inhibitor A6 (Hyacinthus orientalis (Common hyacinth)).